Consider the following 144-residue polypeptide: Large ribosomal subunit protein uL15 (144 aa).

Residues methionine 1–glutamine 54 are disordered. Gly residues-rich tracts occupy residues arginine 21–alanine 31 and serine 42–glycine 52.

This sequence belongs to the universal ribosomal protein uL15 family. Part of the 50S ribosomal subunit.

Functionally, binds to the 23S rRNA. The polypeptide is Large ribosomal subunit protein uL15 (Shewanella baltica (strain OS223)).